A 285-amino-acid polypeptide reads, in one-letter code: Pantothenate synthetase (285 aa).

30-37 contributes to the ATP binding site; sequence MGNLHDGH. His-37 serves as the catalytic Proton donor. Gln-61 contacts (R)-pantoate. Gln-61 lines the beta-alanine pocket. 149–152 lines the ATP pocket; that stretch reads GEKD. Gln-155 serves as a coordination point for (R)-pantoate. ATP-binding positions include Ile-178 and 186–189; that span reads FSSR.

This sequence belongs to the pantothenate synthetase family. In terms of assembly, homodimer.

The protein resides in the cytoplasm. It catalyses the reaction (R)-pantoate + beta-alanine + ATP = (R)-pantothenate + AMP + diphosphate + H(+). The protein operates within cofactor biosynthesis; (R)-pantothenate biosynthesis; (R)-pantothenate from (R)-pantoate and beta-alanine: step 1/1. In terms of biological role, catalyzes the condensation of pantoate with beta-alanine in an ATP-dependent reaction via a pantoyl-adenylate intermediate. The protein is Pantothenate synthetase of Buchnera aphidicola subsp. Schizaphis graminum (strain Sg).